The sequence spans 71 residues: Delta-actitoxin-Avd2b 4 (71 aa).

The N-terminal stretch at 1–20 (MMNRLLVFLMLGAFMLVVSA) is a signal peptide. The propeptide occupies 21 to 41 (NDAYGDEPAFKDLNQGDESLG). Intrachain disulfides connect Cys46–Cys61, Cys47–Cys55, and Cys49–Cys66.

It belongs to the sea anemone short toxin (type III) family.

The protein resides in the secreted. It localises to the nematocyst. Its function is as follows. Voltage-gated sodium channel (Nav) inhibitor. 1 uM completely inhibits insect voltage-gated sodium channel inactivation (DmNav1 from D.melanogaster). This chain is Delta-actitoxin-Avd2b 4, found in Anemonia viridis (Snakelocks anemone).